Here is a 599-residue protein sequence, read N- to C-terminus: MVGESTIRNFAIIAHIDHGKSTLADRLIEACNALSDRDMKDQVLDSMDIERERGITIKAQTVRLTYAAKDGVVYHLNLVDTPGHVDFSYEVSRSLAACEGSLLVIDSSQGVEAQTLANVYKAIENDHEIVTVLNKADLASSDPERVKSQVEEIIGLDASGALLISAKTGMGISDVLEAIVHRLPAPVGDANAPLKAILVDSWYDPYLGIVILLRVKDGVLKKGMKVAMLSTGAVYQVDNVGVFTPNKQMVDSLSVGEIGFITAGIKEIADCKVGDTLTEDSRRCDNPFPGFRATCPVVFCSLFPVDASSFEHLREALGKLQLNDSSFTFDMESSTALGYGFRCGFLGMLHLEVVQERLEREFDLDLTATAPSVVYRVTDKHRVTKEVHNPNDLPESHEILGVEEPWIAATIMVPDQYLGSILALCNSKRGEKVDLSYTGSMALLKYRLPLAEVVFDFYDSLKSVSKGYASLDWYVDGYVPTEISKLTILINSEPVDALSCIIHKSKVESRGREICERLKDLIPRQQYKVAIQAAVGAKIVARETISPYRKDVTAKVYGRDVTRKMKLLEKQKKGKKRLRSIGNVNVPQSAFIQALKMKD.

Residues 5-187 (STIRNFAIIA…AIVHRLPAPV (183 aa)) form the tr-type G domain. Residues 17-22 (DHGKST) and 134-137 (NKAD) each bind GTP.

The protein belongs to the TRAFAC class translation factor GTPase superfamily. Classic translation factor GTPase family. LepA subfamily.

It localises to the cell inner membrane. It carries out the reaction GTP + H2O = GDP + phosphate + H(+). Functionally, required for accurate and efficient protein synthesis under certain stress conditions. May act as a fidelity factor of the translation reaction, by catalyzing a one-codon backward translocation of tRNAs on improperly translocated ribosomes. Back-translocation proceeds from a post-translocation (POST) complex to a pre-translocation (PRE) complex, thus giving elongation factor G a second chance to translocate the tRNAs correctly. Binds to ribosomes in a GTP-dependent manner. The protein is Elongation factor 4 of Anaplasma marginale (strain Florida).